A 156-amino-acid chain; its full sequence is ADKAASGVLTKLPQKQIQEMKEAFSMIDVDRDGFVNKDDLKAISEQLGRTPDDKELTAMLKEAPGPLNFTMFLSIFSDKLSGTDTEETLRNAFAMFDELDTKKLNIEYIKDLLENMGDNFTKDEMRMTFKEAPVTGGKFDYVKFTAMIKGSGEEEA.

Alanine 1 is subject to Blocked amino end (Ala). 2 EF-hand domains span residues 15 to 50 and 84 to 119; these read KQIQ…LGRT and DTEE…MGDN. Ca(2+) is bound by residues aspartate 28, aspartate 30, aspartate 32, and aspartate 39.

Functionally, in molluscan muscle, calcium regulation is associated with myosin rather than with actin. Muscle myosin contains two types of light chains: the catalytic light chain, essential for ATPase activity, and the regulatory light chain, a calcium-binding protein responsible for Ca(2+) dependent binding and Ca(2+) dependent Mg-ATPase activity. This Mizuhopecten yessoensis (Japanese scallop) protein is Myosin regulatory light chain, striated adductor muscle.